Reading from the N-terminus, the 901-residue chain is Quinate repressor protein (901 aa).

The tract at residues M1–P88 is sufficient for repression. Disordered regions lie at residues L26–R59 and E878–M901. Residues Q31–A43 show a composition bias toward polar residues.

It in the N-terminal section; belongs to the shikimate kinase family. This sequence in the 2nd section; belongs to the type-I 3-dehydroquinase family. The protein in the C-terminal section; belongs to the shikimate dehydrogenase family. Interacts with qutA; transcriptional activator of the quinate utilization pathway genes.

Multi-domain repressor protein that negatively regulates transcription of the quinate utilization pathway genes. May mediate its repressor activity by binding directly to the qutA activator protein. The polypeptide is Quinate repressor protein (qutR) (Emericella nidulans (strain FGSC A4 / ATCC 38163 / CBS 112.46 / NRRL 194 / M139) (Aspergillus nidulans)).